We begin with the raw amino-acid sequence, 727 residues long: Capsid protein VP1 (727 aa).

The span at 1–10 (MAPPAKRARR) shows a compositional bias: basic residues. 3 disordered regions span residues 1–38 (MAPPAKRARRGLVPPGYKYLGPGNSLDQGEPTNPSDAA), 95–120 (VLTDTPDHPSTSRPTKPTKRSKPPPH), and 141–184 (LAPM…VGIS). Positions 4-13 (PAKRARRGLV) match the Nuclear localization signal motif. The phospholipase A2-like stretch occupies residues 19 to 64 (YLGPGNSLDQGEPTNPSDAAAKEHDEAYAAYLRSGKNPYLYFSPAD). Positions 25-35 (SLDQGEPTNPS) are enriched in polar residues. Gly residues predominate over residues 166–183 (SGNGSGGGGGGGSGGVGI). Residue N323 coordinates Mg(2+). C633 and C637 are oxidised to a cystine.

This sequence belongs to the parvoviridae capsid protein family. Interacts with host TFRC.

The protein resides in the virion. The protein localises to the host nucleus. Capsid protein self-assembles to form an icosahedral capsid with a T=1 symmetry, about 22 nm in diameter, and consisting of 60 copies of two size variants of the capsid proteins, VP1 and VP2, which differ by the presence of an N-terminal extension in the minor protein VP1. The capsid encapsulates the genomic ssDNA. Capsid proteins are responsible for the attachment to host cell receptors. This attachment induces virion internalization predominantly through clathrin-dependent endocytosis. Binding to the host receptors also induces capsid rearrangements leading to surface exposure of VP1 N-terminus, specifically its phospholipase A2-like region and putative nuclear localization signal(s). VP1 N-terminus might serve as a lipolytic enzyme to breach the endosomal membrane during entry into host cell and might contribute to virus transport to the nucleus. This is Capsid protein VP1 from Feline panleukopenia virus (strain 193) (FPV).